A 305-amino-acid chain; its full sequence is Coiled-coil domain-containing protein 83 (305 aa).

The disordered stretch occupies residues 1–25; the sequence is MDSSAKGSKKDAPDGPPKDSKLPVS. The span at 8–21 shows a compositional bias: basic and acidic residues; it reads SKKDAPDGPPKDSK. Residues 37-186 are a coiled coil; sequence ENAVERFMFH…LEDEKKRISR (150 aa).

The polypeptide is Coiled-coil domain-containing protein 83 (Ccdc83) (Mus musculus (Mouse)).